The primary structure comprises 203 residues: Small ribosomal subunit protein uS4c (203 aa).

The disordered stretch occupies residues 17 to 39; it reads TLPGLTTKKSNKLNRPGKDGNTD. Positions 92–164 constitute an S4 RNA-binding domain; sequence MRLDTLCFTL…IKNNQVREIP (73 aa).

This sequence belongs to the universal ribosomal protein uS4 family. As to quaternary structure, part of the 30S ribosomal subunit. Contacts protein S5. The interaction surface between S4 and S5 is involved in control of translational fidelity.

Its subcellular location is the plastid. The protein resides in the chloroplast. One of the primary rRNA binding proteins, it binds directly to 16S rRNA where it nucleates assembly of the body of the 30S subunit. Functionally, with S5 and S12 plays an important role in translational accuracy. The polypeptide is Small ribosomal subunit protein uS4c (rps4) (Phaeodactylum tricornutum (strain CCAP 1055/1)).